We begin with the raw amino-acid sequence, 423 residues long: Imidazolonepropionase (423 aa).

Positions 78 and 80 each coordinate Fe(3+). Histidine 78 and histidine 80 together coordinate Zn(2+). 3 residues coordinate 4-imidazolone-5-propanoate: arginine 87, tyrosine 150, and histidine 183. Tyrosine 150 is a binding site for N-formimidoyl-L-glutamate. Histidine 247 contributes to the Fe(3+) binding site. A Zn(2+)-binding site is contributed by histidine 247. Glutamate 250 is a 4-imidazolone-5-propanoate binding site. Aspartate 322 contacts Fe(3+). Aspartate 322 contacts Zn(2+). N-formimidoyl-L-glutamate-binding residues include asparagine 324 and glycine 326. Residue serine 327 participates in 4-imidazolone-5-propanoate binding.

This sequence belongs to the metallo-dependent hydrolases superfamily. HutI family. Zn(2+) serves as cofactor. It depends on Fe(3+) as a cofactor.

Its subcellular location is the cytoplasm. The catalysed reaction is 4-imidazolone-5-propanoate + H2O = N-formimidoyl-L-glutamate. Its pathway is amino-acid degradation; L-histidine degradation into L-glutamate; N-formimidoyl-L-glutamate from L-histidine: step 3/3. Functionally, catalyzes the hydrolytic cleavage of the carbon-nitrogen bond in imidazolone-5-propanoate to yield N-formimidoyl-L-glutamate. It is the third step in the universal histidine degradation pathway. This chain is Imidazolonepropionase, found in Bacillus cereus (strain B4264).